A 214-amino-acid polypeptide reads, in one-letter code: MNQSLLASFGSSEERVIAALDTFKQGNGVLVLDDENRENEGDLIFPAETITTEQMAKLIRYGSGIVCLCITDELCQKLELPPMVAANTSVNKTAFTVTIEAAEGVSTGVSAADRVTTVKVAVADNAKPSDLHHPGHVFPLRAAENGVLARPGHTEAAVDLARLCGYKPAGVICEITNDDGTMARTPELVAFAQKFGYAVVTIEDLIAYRTKYNK.

D-ribulose 5-phosphate is bound by residues 37–38 (RE), D42, 150–154 (RPGHT), and E174. A Mg(2+)-binding site is contributed by E38. H153 lines the Mg(2+) pocket.

It belongs to the DHBP synthase family. In terms of assembly, homodimer. The cofactor is Mg(2+). Mn(2+) is required as a cofactor.

The enzyme catalyses D-ribulose 5-phosphate = (2S)-2-hydroxy-3-oxobutyl phosphate + formate + H(+). It participates in cofactor biosynthesis; riboflavin biosynthesis; 2-hydroxy-3-oxobutyl phosphate from D-ribulose 5-phosphate: step 1/1. Its function is as follows. Catalyzes the conversion of D-ribulose 5-phosphate to formate and 3,4-dihydroxy-2-butanone 4-phosphate. This Mannheimia succiniciproducens (strain KCTC 0769BP / MBEL55E) protein is 3,4-dihydroxy-2-butanone 4-phosphate synthase.